Here is a 698-residue protein sequence, read N- to C-terminus: Interleukin enhancer-binding factor 3 (698 aa).

The DZF domain maps to 5–379; it reads RIFLNDDRHV…ALKRPMEEDG (375 aa). 3 disordered regions span residues 51-88, 374-403, and 473-522; these read QQEKDCSGEQEQPEPEEPETTEEGKDSEGKTGENPTRT, PMEEDGEDKSPSKKKKKIQKKDEKSEPPQA, and EEKE…KHGK. Residues 61–71 show a composition bias toward acidic residues; the sequence is EQPEPEEPETT. Composition is skewed to basic and acidic residues over residues 72-81 and 374-384; these read EEGKDSEGKT and PMEEDGEDKSP. The short motif at 372 to 390 is the Bipartite nuclear localization signal element; sequence KRPMEEDGEDKSPSKKKKK. The DRBM 1 domain maps to 399 to 468; that stretch reads EPPQAMNALM…AVKVLQDMGL (70 aa). A compositionally biased stretch (polar residues) spans 490–503; that stretch reads TPAQPADSTQTDSA. The 67-residue stretch at 520 to 586 folds into the DRBM 2 domain; sequence HGKNPVMELN…ALAALEKLFP (67 aa).

As to quaternary structure, a component of a ybx2/frgy2-containing mRNA-ribonucleoprotein (mRNP) complex. Also a component of the CCAAT box transcription factor (CBTF) complex. Phosphorylated. Phosphorylation affects nuclear translocation. In terms of processing, methylated by protein arginine N-methyltransferase 1 (prmt1b) in the RGG-rich domain. Methylation decreases DNA-binding and thereby decreases transcription of the gata2 gene, but does not regulate dsRNA binding or subcellular localization.

It is found in the nucleus. Its subcellular location is the cytoplasm. RNA-binding protein that plays an essential role in the biogenesis of circular RNAs (circRNAs) which are produced by back-splicing circularization of pre-mRNAs. Within the nucleus, promotes circRNAs processing by stabilizing the regulatory elements residing in the flanking introns of the circularized exons. Plays thereby a role in the back-splicing of a subset of circRNAs. As a consequence, participates in a wide range of transcriptional and post-transcriptional processes. Binds to poly-U elements and AU-rich elements (AREs) in the 3'-UTR of target mRNAs. Upon viral infection, ILF3 accumulates in the cytoplasm and participates in the innate antiviral response. Mechanistically, ILF3 becomes phosphorylated and activated by the double-stranded RNA-activated protein kinase/PKR which releases ILF3 from cellular mature circRNAs. In turn, unbound ILF3 molecules are able to interact with and thus inhibit viral mRNAs. Has a cytoplasmic role early in development as part of a ribonucleoprotein (mRNP) complex which may regulate mRNA transport and/or translation. Following nuclear localization at the mid-blastula transition, acts as a transcription factor and binds the 5'-CCAAT-3' promoter sequence to regulate transcription of the gata2 gene as a subunit of the CCAAT box transcription factor (CBTF). Its role as an mRNP component negatively regulates its activity as a transcription factor by precluding its nuclear localization. The protein is Interleukin enhancer-binding factor 3 of Xenopus tropicalis (Western clawed frog).